We begin with the raw amino-acid sequence, 959 residues long: DNA polymerase 1 (959 aa).

The interval 1–110 (MRVRGGQEAA…LTLEPSPQSE (110 aa)) is disordered. Residues 44–60 (KKPEPPPTLHREREPES) show a composition bias toward basic and acidic residues.

Belongs to the DNA polymerase type-B family.

The enzyme catalyses DNA(n) + a 2'-deoxyribonucleoside 5'-triphosphate = DNA(n+1) + diphosphate. The polypeptide is DNA polymerase 1 (polA) (Aeropyrum pernix (strain ATCC 700893 / DSM 11879 / JCM 9820 / NBRC 100138 / K1)).